The primary structure comprises 385 residues: Multidrug resistance protein MdtE (385 aa).

The signal sequence occupies residues 1-20 (MNRRRKLLIPLLFCGAMLTA). C21 is lipidated: N-palmitoyl cysteine. The S-diacylglycerol cysteine moiety is linked to residue C21.

Belongs to the membrane fusion protein (MFP) (TC 8.A.1) family. As to quaternary structure, homotrimer. Part of the tripartite efflux system MdtEF-TolC, which is composed of an inner membrane transporter, MdtF, a membrane fusion protein, MdtE, and an outer membrane component, TolC. The complex forms a large protein conduit and can translocate molecules across both the inner and outer membranes.

The protein resides in the cell inner membrane. Functionally, part of the tripartite efflux system MdtEF-TolC, which confers resistance to various compounds. This is Multidrug resistance protein MdtE (mdtE) from Escherichia coli O6:H1 (strain CFT073 / ATCC 700928 / UPEC).